We begin with the raw amino-acid sequence, 198 residues long: Superoxide dismutase [Mn], mitochondrial (198 aa).

H26 provides a ligand contact to Mn(2+). Y34 carries the 3'-nitrotyrosine modification. 2 positions are modified to N6-acetyllysine; alternate: K44 and K51. An N6-succinyllysine; alternate mark is found at K44 and K51. H74 serves as a coordination point for Mn(2+). The residue at position 90 (K90) is an N6-acetyllysine. Residues K98 and K106 each carry the N6-acetyllysine; alternate modification. Residues K98 and K106 each carry the N6-succinyllysine; alternate modification. Residues D159 and H163 each contribute to the Mn(2+) site. K178 is subject to N6-acetyllysine.

It belongs to the iron/manganese superoxide dismutase family. In terms of assembly, homotetramer. Requires Mn(2+) as cofactor. Post-translationally, nitrated under oxidative stress. Nitration coupled with oxidation inhibits the catalytic activity. In terms of processing, acetylation at Lys-98 decreases enzymatic activity. Deacetylated by SIRT3 upon exposure to ionizing radiations or after long fasting. Polyubiquitinated; leading to proteasomal degradation. Deubiquitinated by USP36 which increases protein stability.

Its subcellular location is the mitochondrion matrix. It catalyses the reaction 2 superoxide + 2 H(+) = H2O2 + O2. Its function is as follows. Destroys superoxide anion radicals which are normally produced within the cells and which are toxic to biological systems. The polypeptide is Superoxide dismutase [Mn], mitochondrial (SOD2) (Callithrix jacchus (White-tufted-ear marmoset)).